Here is a 67-residue protein sequence, read N- to C-terminus: Moricin (67 aa).

Residues 1–23 form the signal peptide; that stretch reads MKLTSLFIFVIVALSLLFSSTDA.

Belongs to the moricin family. In terms of assembly, monomer.

It is found in the secreted. Its function is as follows. Antimicrobial peptide. Active against a broad spectrum of Gram-positive and Gram-negative bacteria including methicillin-resistant S.aureus ATCC 43 300, S.aureus BAA-39, pathogenic strains of L.monocytogenes, K.pneumoniae, E.coli O157:H7, S.typhimurium and multidrug-resistant S.typhimurium DT104 with minimum inhibitory concentration (MIC) of 1.4 uM for all except for S.aureus BAA-39. Also active against Serratia marcescens. Probably acts by disturbing membrane functions with its amphipathic alpha-helical structure. May protect a developing embryo from bacterial infection. The protein is Moricin of Manduca sexta (Tobacco hawkmoth).